A 133-amino-acid chain; its full sequence is Antifungal protein ginkbilobin-like protein 2 (133 aa).

Positions methionine 1–glycine 24 are cleaved as a signal peptide. A Gnk2-homologous domain is found at threonine 28–isoleucine 133. Residue asparagine 36 participates in alpha-D-mannopyranose binding. Disulfide bonds link cysteine 87–cysteine 96 and cysteine 99–cysteine 124. Alpha-D-mannopyranose-binding residues include arginine 118 and glutamate 129.

Its function is as follows. Exerts antifungal activity through its carbohydrate-binding specificity. In Picea glauca (White spruce), this protein is Antifungal protein ginkbilobin-like protein 2.